The sequence spans 339 residues: Anthranilate phosphoribosyltransferase (339 aa).

Residues Gly-81, 84–85, Ser-89, 91–94, 109–117, and Ala-121 each bind 5-phospho-alpha-D-ribose 1-diphosphate; these read GD, NVSS, and KHGNRALSS. Gly-81 contributes to the anthranilate binding site. Ser-93 provides a ligand contact to Mg(2+). Asn-112 lines the anthranilate pocket. Arg-167 is a binding site for anthranilate. Residues Asp-225 and Glu-226 each coordinate Mg(2+).

It belongs to the anthranilate phosphoribosyltransferase family. Homodimer. The cofactor is Mg(2+).

It catalyses the reaction N-(5-phospho-beta-D-ribosyl)anthranilate + diphosphate = 5-phospho-alpha-D-ribose 1-diphosphate + anthranilate. It functions in the pathway amino-acid biosynthesis; L-tryptophan biosynthesis; L-tryptophan from chorismate: step 2/5. In terms of biological role, catalyzes the transfer of the phosphoribosyl group of 5-phosphorylribose-1-pyrophosphate (PRPP) to anthranilate to yield N-(5'-phosphoribosyl)-anthranilate (PRA). This Brucella canis (strain ATCC 23365 / NCTC 10854 / RM-666) protein is Anthranilate phosphoribosyltransferase.